Consider the following 22-residue polypeptide: Lantibiotic mutacin B-Ny266 (22 aa).

Positions 3-7 (SWSFC) form a cross-link, lanthionine (Ser-Cys). The residue at position 5 (Ser5) is a 2,3-didehydroalanine (Ser). The beta-methyllanthionine (Thr-Cys) cross-link spans 8–11 (TPGC). At Thr14 the chain carries 2,3-didehydrobutyrine. The segment at residues 16-21 (SFNSYC) is a cross-link (lanthionine (Ser-Cys)). Residues 19-22 (SYCC) constitute a cross-link (S-(2-aminovinyl)-D-cysteine (Ser-Cys)).

Maturation of lantibiotics involves the enzymatic conversion of Thr, and Ser into dehydrated AA and the formation of thioether bonds with cysteine. The C-terminal lanthionine undergoes decarboxylation. This is followed by membrane translocation and cleavage of the modified precursor. Post-translationally, it is not established whether the 2,3-didehydrobutyrine is the E- or Z-isomer.

In terms of biological role, lanthionine-containing peptide antibiotic (lantibiotic) active on Gram-positive bacteria. The bactericidal activity of lantibiotics is based on depolarization of energized bacterial cytoplasmic membranes, initiated by the formation of aqueous transmembrane pores. The protein is Lantibiotic mutacin B-Ny266 of Streptococcus mutans.